We begin with the raw amino-acid sequence, 92 residues long: UPF0125 protein NMA1005 (92 aa).

The protein belongs to the UPF0125 (RnfH) family.

In Neisseria meningitidis serogroup A / serotype 4A (strain DSM 15465 / Z2491), this protein is UPF0125 protein NMA1005.